Consider the following 102-residue polypeptide: Small ribosomal subunit protein eS24 (102 aa).

It belongs to the eukaryotic ribosomal protein eS24 family.

This chain is Small ribosomal subunit protein eS24, found in Methanococcus maripaludis (strain DSM 14266 / JCM 13030 / NBRC 101832 / S2 / LL).